The primary structure comprises 163 residues: Nucleotide-binding protein CYB_0891 (163 aa).

Belongs to the YajQ family.

Its function is as follows. Nucleotide-binding protein. The chain is Nucleotide-binding protein CYB_0891 from Synechococcus sp. (strain JA-2-3B'a(2-13)) (Cyanobacteria bacterium Yellowstone B-Prime).